The primary structure comprises 204 residues: Nucleoside triphosphate pyrophosphatase (204 aa).

D78 serves as the catalytic Proton acceptor.

The protein belongs to the Maf family. A divalent metal cation is required as a cofactor.

It localises to the cytoplasm. It carries out the reaction a ribonucleoside 5'-triphosphate + H2O = a ribonucleoside 5'-phosphate + diphosphate + H(+). The enzyme catalyses a 2'-deoxyribonucleoside 5'-triphosphate + H2O = a 2'-deoxyribonucleoside 5'-phosphate + diphosphate + H(+). Its function is as follows. Nucleoside triphosphate pyrophosphatase. May have a dual role in cell division arrest and in preventing the incorporation of modified nucleotides into cellular nucleic acids. This chain is Nucleoside triphosphate pyrophosphatase, found in Prochlorococcus marinus (strain MIT 9215).